A 187-amino-acid polypeptide reads, in one-letter code: Large ribosomal subunit protein uL6 (187 aa).

This sequence belongs to the universal ribosomal protein uL6 family. As to quaternary structure, part of the 50S ribosomal subunit.

In terms of biological role, this protein binds to the 23S rRNA, and is important in its secondary structure. It is located near the subunit interface in the base of the L7/L12 stalk, and near the tRNA binding site of the peptidyltransferase center. In Roseiflexus castenholzii (strain DSM 13941 / HLO8), this protein is Large ribosomal subunit protein uL6.